We begin with the raw amino-acid sequence, 267 residues long: 5'-nucleotidase SurE (267 aa).

Positions 9, 10, 40, and 97 each coordinate a divalent metal cation.

Belongs to the SurE nucleotidase family. A divalent metal cation is required as a cofactor.

The protein resides in the cytoplasm. It carries out the reaction a ribonucleoside 5'-phosphate + H2O = a ribonucleoside + phosphate. Nucleotidase that shows phosphatase activity on nucleoside 5'-monophosphates. This chain is 5'-nucleotidase SurE, found in Helicobacter pylori (strain J99 / ATCC 700824) (Campylobacter pylori J99).